The primary structure comprises 79 residues: D-alanyl carrier protein (79 aa).

A Carrier domain is found at 1–77 (MDVKAEVIEI…KIVEGVTELR (77 aa)). Ser-35 carries the post-translational modification O-(pantetheine 4'-phosphoryl)serine.

This sequence belongs to the DltC family. Post-translationally, 4'-phosphopantetheine is transferred from CoA to a specific serine of apo-DCP.

Its subcellular location is the cytoplasm. It participates in cell wall biogenesis; lipoteichoic acid biosynthesis. In terms of biological role, carrier protein involved in the D-alanylation of lipoteichoic acid (LTA). The loading of thioester-linked D-alanine onto DltC is catalyzed by D-alanine--D-alanyl carrier protein ligase DltA. The DltC-carried D-alanyl group is further transferred to cell membrane phosphatidylglycerol (PG) by forming an ester bond, probably catalyzed by DltD. D-alanylation of LTA plays an important role in modulating the properties of the cell wall in Gram-positive bacteria, influencing the net charge of the cell wall. This is D-alanyl carrier protein from Streptococcus thermophilus (strain CNRZ 1066).